The chain runs to 482 residues: uncharacterized protein (482 aa).

A DWNN domain is found at 5 to 79 (IYYKFKSQKD…STSVIVRRVP (75 aa)). Residues 86–108 (GTAARYVSGAPKTTGARSDSVKR) are disordered. A CCHC-type zinc finger spans residues 183 to 200 (YICYRCGQKGHWIQACPT). The segment at 282-322 (CTLCKKLARNACRTPCCDKLFCEECIQTALLDSDFECPNCH) adopts an RING-type; degenerate zinc-finger fold. 2 disordered regions span residues 346–393 (KSVL…SSAV) and 447–482 (QVYH…TKTN). Over residues 451–466 (NNRNPPRTNSRPSNAS) the composition is skewed to low complexity.

Its subcellular location is the nucleus. This is an uncharacterized protein from Schizosaccharomyces pombe (strain 972 / ATCC 24843) (Fission yeast).